The sequence spans 352 residues: Ferrochelatase (352 aa).

Fe cation contacts are provided by His-222 and Glu-303.

It belongs to the ferrochelatase family.

The protein localises to the cytoplasm. It carries out the reaction heme b + 2 H(+) = protoporphyrin IX + Fe(2+). It functions in the pathway porphyrin-containing compound metabolism; protoheme biosynthesis; protoheme from protoporphyrin-IX: step 1/1. Functionally, catalyzes the ferrous insertion into protoporphyrin IX. The protein is Ferrochelatase of Brucella abortus (strain S19).